A 120-amino-acid polypeptide reads, in one-letter code: SFAGAEAANASQLQSIARQVRGAVNAVAGQVTGNGGSGNSGTSAAAANPNSDNTASIADRGTSAIMTTASATASSTGVDGGIAATYAVASQWDGGYVANYTITQFGRDFDDRLAVAIHFA.

Residues 29-59 (GQVTGNGGSGNSGTSAAAANPNSDNTASIAD) form a disordered region. Residues 40–51 (SGTSAAAANPNS) show a composition bias toward low complexity.

This sequence belongs to the mycobacterial PE family. As to quaternary structure, forms a complex with PE9. The complex interacts with human TLR4.

The protein resides in the secreted. The protein localises to the cell wall. In terms of biological role, together with PE9, induces macrophage apoptosis through human Toll-like receptor 4 (TLR4) signaling pathway. Interaction with TLR4 leads to increased levels of phospho-IRF-3, increase in the transcript levels of IFN-beta and pro-apoptotic genes, up-regulation of IL-10, down-regulation of IL-1b and enhanced levels of macrophage apoptosis. In Mycobacterium tuberculosis (strain ATCC 25618 / H37Rv), this protein is PE family protein PE10.